A 345-amino-acid polypeptide reads, in one-letter code: Uroporphyrinogen decarboxylase (345 aa).

Residues 27–31, phenylalanine 46, aspartate 76, tyrosine 152, serine 207, and histidine 321 each bind substrate; that span reads RQAGR.

The protein belongs to the uroporphyrinogen decarboxylase family. As to quaternary structure, homodimer.

It is found in the cytoplasm. It carries out the reaction uroporphyrinogen III + 4 H(+) = coproporphyrinogen III + 4 CO2. Its pathway is porphyrin-containing compound metabolism; protoporphyrin-IX biosynthesis; coproporphyrinogen-III from 5-aminolevulinate: step 4/4. Catalyzes the decarboxylation of four acetate groups of uroporphyrinogen-III to yield coproporphyrinogen-III. This chain is Uroporphyrinogen decarboxylase, found in Staphylococcus aureus (strain MRSA252).